We begin with the raw amino-acid sequence, 1102 residues long: Trafficking protein particle complex II-specific subunit 130 (1102 aa).

Belongs to the TMEM1 family. Part of the multisubunit TRAPP (transport protein particle) II complex composed of BET3, BET5, TRS20, TRS23, TRS31, TRS33, TRS65, TRS120 and TRS130. Interacts with YPT31 and YPT32.

It localises to the golgi apparatus. In terms of biological role, specific subunit of the TRAPP II complex, a highly conserved vesicle tethering complex that functions in the late Golgi as a guanine nucleotide exchange factor (GEF) for the Golgi YPT1 GTPase. TRS130 plays a role in the YPT GEF activity of TRAPP II in concert with the two other TRAPP II-specific subunits TRS65 and TRS120. Required for both the cytoplasm-to-vacuole targeting (Cvt) pathway and starvation-induced autophagy through its role in ATG8 and ATG9 trafficking. In Saccharomyces cerevisiae (strain ATCC 204508 / S288c) (Baker's yeast), this protein is Trafficking protein particle complex II-specific subunit 130 (TRS130).